We begin with the raw amino-acid sequence, 323 residues long: Quinolinate synthase (323 aa).

Iminosuccinate is bound by residues H37 and S54. [4Fe-4S] cluster is bound at residue C99. Iminosuccinate-binding positions include 125–127 and S142; that span reads YIN. Residue C185 participates in [4Fe-4S] cluster binding. Iminosuccinate contacts are provided by residues 211-213 and T228; that span reads HPE. [4Fe-4S] cluster is bound at residue C278.

It belongs to the quinolinate synthase family. Type 2 subfamily. [4Fe-4S] cluster is required as a cofactor.

It localises to the cytoplasm. It catalyses the reaction iminosuccinate + dihydroxyacetone phosphate = quinolinate + phosphate + 2 H2O + H(+). It participates in cofactor biosynthesis; NAD(+) biosynthesis; quinolinate from iminoaspartate: step 1/1. Catalyzes the condensation of iminoaspartate with dihydroxyacetone phosphate to form quinolinate. In Trichodesmium erythraeum (strain IMS101), this protein is Quinolinate synthase.